A 563-amino-acid polypeptide reads, in one-letter code: Putative inactive polypeptide N-acetylgalactosaminyltransferase 12 (563 aa).

Residues 1–6 (MEVFAS) are Cytoplasmic-facing. The chain crosses the membrane as a helical; Signal-anchor for type II membrane protein span at residues 7-29 (VLNCCFKYIVLPVWIFIVLLLLH). Topologically, residues 30-563 (RDLSSWDGLM…SVMQSANILV (534 aa)) are lumenal. A glycan (N-linked (GlcNAc...) asparagine) is linked at asparagine 50. Cysteine 97 and cysteine 334 are oxidised to a cystine. The segment at 109-225 (MKPASIIMIF…NGWLSPLLDT (117 aa)) is catalytic subdomain A. A catalytic subdomain B region spans residues 280–342 (PYEVAAVRTS…PCSRVGHLQP (63 aa)). N-linked (GlcNAc...) asparagine glycosylation is found at asparagine 389 and asparagine 428. Residues 433-549 (ASGHVKTLEF…ANGKQRWILD (117 aa)) form the Ricin B-type lectin domain. The cysteines at positions 446 and 461 are disulfide-linked. N-linked (GlcNAc...) asparagine glycans are attached at residues asparagine 464 and asparagine 469. 2 cysteine pairs are disulfide-bonded: cysteine 485/cysteine 499 and cysteine 523/cysteine 537. An N-linked (GlcNAc...) asparagine glycan is attached at asparagine 552.

This sequence belongs to the glycosyltransferase 2 family. GalNAc-T subfamily.

It localises to the golgi apparatus membrane. Probable inactive glycosyltransferase. The chain is Putative inactive polypeptide N-acetylgalactosaminyltransferase 12 (pgant12) from Drosophila melanogaster (Fruit fly).